The chain runs to 147 residues: Large ribosomal subunit protein uL15 (147 aa).

Basic residues predominate over residues 1-28 (MIRRRKKVRKLRGSHTHGWGCKKKHRGG). Positions 1 to 43 (MIRRRKKVRKLRGSHTHGWGCKKKHRGGGSKGGRGMAGTGKRN) are disordered. Residues 29–38 (GSKGGRGMAG) are compositionally biased toward gly residues.

Belongs to the universal ribosomal protein uL15 family. As to quaternary structure, part of the 50S ribosomal subunit.

Binds to the 23S rRNA. The sequence is that of Large ribosomal subunit protein uL15 from Pyrococcus furiosus (strain ATCC 43587 / DSM 3638 / JCM 8422 / Vc1).